The chain runs to 155 residues: Small ribosomal subunit protein uS17 (155 aa).

It belongs to the universal ribosomal protein uS17 family. Component of the small ribosomal subunit. Mature ribosomes consist of a small (40S) and a large (60S) subunit. The 40S subunit contains about 32 different proteins and 1 molecule of RNA (18S). The 60S subunit contains 45 different proteins and 3 molecules of RNA (25S, 5.8S and 5S).

The protein resides in the cytoplasm. Its function is as follows. Component of the ribosome, a large ribonucleoprotein complex responsible for the synthesis of proteins in the cell. The small ribosomal subunit (SSU) binds messenger RNAs (mRNAs) and translates the encoded message by selecting cognate aminoacyl-transfer RNA (tRNA) molecules. The large subunit (LSU) contains the ribosomal catalytic site termed the peptidyl transferase center (PTC), which catalyzes the formation of peptide bonds, thereby polymerizing the amino acids delivered by tRNAs into a polypeptide chain. The nascent polypeptides leave the ribosome through a tunnel in the LSU and interact with protein factors that function in enzymatic processing, targeting, and the membrane insertion of nascent chains at the exit of the ribosomal tunnel. In Candida albicans (strain SC5314 / ATCC MYA-2876) (Yeast), this protein is Small ribosomal subunit protein uS17.